Reading from the N-terminus, the 253-residue chain is Imidazole glycerol phosphate synthase subunit HisF (253 aa).

Catalysis depends on residues Asp11 and Asp130.

It belongs to the HisA/HisF family. In terms of assembly, heterodimer of HisH and HisF.

It is found in the cytoplasm. It catalyses the reaction 5-[(5-phospho-1-deoxy-D-ribulos-1-ylimino)methylamino]-1-(5-phospho-beta-D-ribosyl)imidazole-4-carboxamide + L-glutamine = D-erythro-1-(imidazol-4-yl)glycerol 3-phosphate + 5-amino-1-(5-phospho-beta-D-ribosyl)imidazole-4-carboxamide + L-glutamate + H(+). It participates in amino-acid biosynthesis; L-histidine biosynthesis; L-histidine from 5-phospho-alpha-D-ribose 1-diphosphate: step 5/9. Its function is as follows. IGPS catalyzes the conversion of PRFAR and glutamine to IGP, AICAR and glutamate. The HisF subunit catalyzes the cyclization activity that produces IGP and AICAR from PRFAR using the ammonia provided by the HisH subunit. The protein is Imidazole glycerol phosphate synthase subunit HisF of Cereibacter sphaeroides (strain ATCC 17029 / ATH 2.4.9) (Rhodobacter sphaeroides).